Reading from the N-terminus, the 661-residue chain is Acyl-coenzyme A oxidase acox-1.2 (661 aa).

FAD is bound by residues 147–150 (YAQT), 155–156 (GS), and Gly-189. Residues 283–286 (KIGY) and Arg-293 contribute to the substrate site. Residues Arg-318 and 338-341 (QQHR) each bind FAD. Positions 340, 390, 394, and 402 each coordinate ATP. Position 409 (Gly-409) interacts with FAD. 431 to 432 (YE) serves as a coordination point for substrate. Glu-432 (proton acceptor) is an active-site residue. Position 434 (Glu-434) interacts with FAD. Residues 525–528 (RASR) and Tyr-573 each bind ATP. A Microbody targeting signal motif is present at residues 659–661 (AKL).

It belongs to the acyl-CoA oxidase family. Homodimer. Forms a heterodimer with acox-1.1. FAD serves as cofactor.

It localises to the peroxisome. The enzyme catalyses asc-omegaC5-CoA + O2 = asc-omegaDeltaC5-CoA + H2O2. The protein operates within lipid metabolism; peroxisomal fatty acid beta-oxidation. Its activity is regulated as follows. Activated by ATP. ATP binding leads to a conformational change that promotes FAD cofactor binding and enzyme activity. ATP binding likely occurs during acox-1.2 folding and/or dimer formation. The preference for processing substrates with shorter fatty acid chains is likely due to the closed conformation of the active site. Functionally, involved in the first step of peroxisomal beta-oxidation by catalyzing the desaturation of fatty acid-derived side chains of ascaroside pheromones, which regulates development and behavior. Specifically, shortens ascarosides with 5-carbon omega side chain (asc-omega-C5). Does not shorten indol-3-carbonyl(IC)-ascaroside with 7-carbon or 9-carbon side chains. Does not catalyze the desaturation of fatty acids or hydroxylated fatty acids. This chain is Acyl-coenzyme A oxidase acox-1.2, found in Caenorhabditis elegans.